A 706-amino-acid polypeptide reads, in one-letter code: Transferrin-binding protein B (706 aa).

An N-terminal signal peptide occupies residues 1 to 20; that stretch reads MKHIPLTTLCVAISAVLLTA. C21 carries the N-palmitoyl cysteine lipid modification. The S-diacylglycerol cysteine moiety is linked to residue C21. Disordered regions lie at residues 26 to 92 and 384 to 412; these read GSNP…KEQV and GSAI…LEGG. Residues 42–51 are compositionally biased toward gly residues; sequence GNTGNTGNAG. The segment covering 389–410 has biased composition (basic and acidic residues); it reads SDKEKDSETKHPFTSDAKDRLE.

Belongs to the TbpB family.

The protein resides in the cell outer membrane. Its subcellular location is the cell surface. Functionally, moraxella acquires iron by extracting it from serum transferrin (TF) in its human host. Acts as a transferrin receptor and is required for transferrin utilization. In Moraxella catarrhalis (Branhamella catarrhalis), this protein is Transferrin-binding protein B.